The chain runs to 709 residues: Translation initiation factor IF-2 (709 aa).

Basic and acidic residues-rich tracts occupy residues 47-70 (DHQY…EKPK) and 105-121 (KGKE…EKKL). Residues 47–157 (DHQYRPNTGK…QPAKKEKELP (111 aa)) are disordered. Basic residues predominate over residues 125-137 (AKKKGKGPAKGKK). Positions 138 to 149 (QAAPAAKQAPQP) are enriched in low complexity. Residues 240–409 (ERPPVVTIMG…LLVSEMEELK (170 aa)) enclose the tr-type G domain. The G1 stretch occupies residues 249–256 (GHVDHGKT). 249–256 (GHVDHGKT) lines the GTP pocket. A G2 region spans residues 274 to 278 (GITQH). Residues 295–298 (DTPG) form a G3 region. GTP is bound by residues 295–299 (DTPGH) and 349–352 (NKID). A G4 region spans residues 349–352 (NKID). Residues 385–387 (SAK) form a G5 region.

It belongs to the TRAFAC class translation factor GTPase superfamily. Classic translation factor GTPase family. IF-2 subfamily.

The protein localises to the cytoplasm. Functionally, one of the essential components for the initiation of protein synthesis. Protects formylmethionyl-tRNA from spontaneous hydrolysis and promotes its binding to the 30S ribosomal subunits. Also involved in the hydrolysis of GTP during the formation of the 70S ribosomal complex. The chain is Translation initiation factor IF-2 from Geobacillus kaustophilus (strain HTA426).